Reading from the N-terminus, the 261-residue chain is MDPTSFDKTKLCFGKPTKFSKVAGAHIINIRYEDKVTKAKVPLSFHTPILFSFGAKTSSFQDGDDNWSMSLMCYDTNKGPSPQETAFIKALEAIECRVKKHLKDKDVKKATEMYQDPLIDMMSMFYRKMEDGVVVPDRAPALYPKLLKSKNNPGQVATGFYKFVRGKEVKIPVVKEKCRVLCDLAIDSIFLGAKPSIQIKLVDVFLVELIGERKKTLKLSKLPSAVQAEINKYSADTDEEEEEEEDNAEDTEEEEEEEADQ.

Positions 230 to 261 (INKYSADTDEEEEEEEDNAEDTEEEEEEEADQ) are disordered. The segment covering 236–261 (DTDEEEEEEEDNAEDTEEEEEEEADQ) has biased composition (acidic residues).

The protein is Early 31 kDa protein of Frog virus 3 (isolate Goorha) (FV-3).